The sequence spans 469 residues: MSFSLRKLLVPILVLVLFLDLCVESGFSQSTPARDDHVHHHGGGCSHSHDHDHDHDHDHHVKKTTAKVEMKLPEELAEEEDMRLCGFGPCLHDHDHESSSTLTGFALWLNALGCSLLVSLASLICLVLLPIMFVQGKPSKWFVDSLALFGAGAMLGDAFLHQLPHAFGGGHSHSNDHHENHDHHDHSHSDSPSHSHSIQDLSVGLSVLAGIVVFLLVEKLVRYVEENSSGSNTWGHHHHHHHAGSKKLKDEGDHNNLDQQSSSDAIVNSSEKVSGGSTDKSLRKRKTSASDATDKSDSGTEITSDGKSDKPEQVETRSSSLVFGYLNLFSDGVHNFTDGMALGSAFLIYGSVGGWSRTMFLLAHELPQEIGDFGILVRSGFTVTKALFFNFLSALVALAGTALVLVWGNEPGQSSLIEGFTAGGFIYIAVAGVLAEMNNSGKSTLKNSACHLISLILGMSVALCISLIE.

Residues 1 to 28 form the signal peptide; sequence MSFSLRKLLVPILVLVLFLDLCVESGFS. The disordered stretch occupies residues 33–58; it reads ARDDHVHHHGGGCSHSHDHDHDHDHD. The segment covering 47–58 has biased composition (basic and acidic residues); that stretch reads HSHDHDHDHDHD. The next 2 membrane-spanning stretches (helical) occupy residues 114 to 134 and 141 to 161; these read CSLL…IMFV and WFVD…AFLH. A disordered region spans residues 170–197; sequence GHSHSNDHHENHDHHDHSHSDSPSHSHS. Positions 173-193 are enriched in basic and acidic residues; the sequence is HSNDHHENHDHHDHSHSDSPS. A helical transmembrane segment spans residues 201 to 221; the sequence is LSVGLSVLAGIVVFLLVEKLV. The disordered stretch occupies residues 228–315; it reads SSGSNTWGHH…GKSDKPEQVE (88 aa). Residues 235–246 show a composition bias toward basic residues; sequence GHHHHHHHAGSK. The segment covering 247–256 has biased composition (basic and acidic residues); sequence KLKDEGDHNN. The segment covering 257–279 has biased composition (polar residues); the sequence is LDQQSSSDAIVNSSEKVSGGSTD. Basic and acidic residues predominate over residues 292–315; the sequence is ATDKSDSGTEITSDGKSDKPEQVE. 3 helical membrane passes run 387 to 407, 415 to 435, and 448 to 468; these read LFFN…VLVW, SLIE…GVLA, and SACH…ISLI.

Belongs to the ZIP transporter (TC 2.A.5) family. KE4/Catsup subfamily.

It is found in the membrane. May participate in auxin metabolism or response. Probable transporter. The polypeptide is IAA-alanine resistance protein 1 (IAR1) (Arabidopsis thaliana (Mouse-ear cress)).